The primary structure comprises 127 residues: Small ribosomal subunit protein uS11 (127 aa).

It belongs to the universal ribosomal protein uS11 family. As to quaternary structure, part of the 30S ribosomal subunit. Interacts with proteins S7 and S18. Binds to IF-3.

In terms of biological role, located on the platform of the 30S subunit, it bridges several disparate RNA helices of the 16S rRNA. Forms part of the Shine-Dalgarno cleft in the 70S ribosome. The chain is Small ribosomal subunit protein uS11 from Anaeromyxobacter sp. (strain Fw109-5).